The sequence spans 290 residues: Probable ATP-dependent kinase TDA10 (290 aa).

38–45 (GPQGSGKS) is a binding site for ATP.

This sequence belongs to the GLYK kinase family.

It localises to the cytoplasm. The protein resides in the nucleus. Functionally, ATP-dependent kinase whose specificity is not yet known. The polypeptide is Probable ATP-dependent kinase TDA10 (TDA10) (Saccharomyces cerevisiae (strain ATCC 204508 / S288c) (Baker's yeast)).